Consider the following 336-residue polypeptide: Glycerol-3-phosphate dehydrogenase [NAD(P)+] (336 aa).

Residues S11, W12, R32, and K109 each contribute to the NADPH site. Residues K109, G140, and S142 each contribute to the sn-glycerol 3-phosphate site. A144 is a binding site for NADPH. Sn-glycerol 3-phosphate is bound by residues K195, D248, S258, R259, and N260. K195 functions as the Proton acceptor in the catalytic mechanism. R259 is an NADPH binding site. Residues V283 and E285 each coordinate NADPH.

It belongs to the NAD-dependent glycerol-3-phosphate dehydrogenase family.

The protein localises to the cytoplasm. The enzyme catalyses sn-glycerol 3-phosphate + NAD(+) = dihydroxyacetone phosphate + NADH + H(+). The catalysed reaction is sn-glycerol 3-phosphate + NADP(+) = dihydroxyacetone phosphate + NADPH + H(+). The protein operates within membrane lipid metabolism; glycerophospholipid metabolism. In terms of biological role, catalyzes the reduction of the glycolytic intermediate dihydroxyacetone phosphate (DHAP) to sn-glycerol 3-phosphate (G3P), the key precursor for phospholipid synthesis. The sequence is that of Glycerol-3-phosphate dehydrogenase [NAD(P)+] from Leuconostoc mesenteroides subsp. mesenteroides (strain ATCC 8293 / DSM 20343 / BCRC 11652 / CCM 1803 / JCM 6124 / NCDO 523 / NBRC 100496 / NCIMB 8023 / NCTC 12954 / NRRL B-1118 / 37Y).